The chain runs to 290 residues: 4-hydroxybenzoate octaprenyltransferase (290 aa).

Helical transmembrane passes span 41-61 (WPLLAIFALGTLLMRSAGCAM), 89-109 (WEAVAIAVVLAFISFLLIQPL), 133-153 (FFAIPQAYLGIAFGFGIPMAF), 158-178 (DTVPMLAWVMLIANIFWSVAY), 202-224 (FGRFDVAAVMLCYAATLGIYVWI), and 269-289 (WLGGVLFAGIAAHYLLAGTAG).

Belongs to the UbiA prenyltransferase family. The cofactor is Mg(2+).

The protein localises to the cell inner membrane. It carries out the reaction all-trans-octaprenyl diphosphate + 4-hydroxybenzoate = 4-hydroxy-3-(all-trans-octaprenyl)benzoate + diphosphate. It participates in cofactor biosynthesis; ubiquinone biosynthesis. Functionally, catalyzes the prenylation of para-hydroxybenzoate (PHB) with an all-trans polyprenyl group. Mediates the second step in the final reaction sequence of ubiquinone-8 (UQ-8) biosynthesis, which is the condensation of the polyisoprenoid side chain with PHB, generating the first membrane-bound Q intermediate 3-octaprenyl-4-hydroxybenzoate. This chain is 4-hydroxybenzoate octaprenyltransferase, found in Burkholderia ambifaria (strain MC40-6).